A 777-amino-acid chain; its full sequence is Zinc finger FYVE domain-containing protein 1 (777 aa).

The tract at residues 416 to 777 is required for localization in the lipid droplets; sequence MAHSSFFPDE…FNCNKKPGDL (362 aa). 2 FYVE-type zinc fingers span residues 598–659 and 715–775; these read NSQI…DARN and DHEI…KKPG. Zn(2+) contacts are provided by C604, C607, C620, C623, C628, C631, C651, C654, C721, C724, C737, C740, C745, C748, C767, and C770.

Interacts with RAB18 (in GTP-bound form). Interacts with BSCL2 in a RAB18-dependent manner. Interacts with ZW10. In terms of tissue distribution, ubiquitous.

It is found in the golgi apparatus. The protein localises to the golgi stack. It localises to the endoplasmic reticulum. Its subcellular location is the preautophagosomal structure. The protein resides in the lipid droplet. It is found in the mitochondrion. Its function is as follows. Plays a role in the formation of lipid droplets (LDs) which are storage organelles at the center of lipid and energy homeostasis. Regulates the morphology, size and distribution of LDs. Mediates the formation of endoplasmic reticulum-lipid droplets (ER-LD) contact sites by forming a complex with RAB18 and ZW10. Binds to phosphatidylinositol 3-phosphate (PtdIns3P) through FYVE-type zinc finger. This Mus musculus (Mouse) protein is Zinc finger FYVE domain-containing protein 1 (Zfyve1).